We begin with the raw amino-acid sequence, 215 residues long: Urease accessory protein UreF (215 aa).

Belongs to the UreF family. UreD, UreF and UreG form a complex that acts as a GTP-hydrolysis-dependent molecular chaperone, activating the urease apoprotein by helping to assemble the nickel containing metallocenter of UreC. The UreE protein probably delivers the nickel.

The protein localises to the cytoplasm. In terms of biological role, required for maturation of urease via the functional incorporation of the urease nickel metallocenter. This chain is Urease accessory protein UreF, found in Paracoccus denitrificans (strain Pd 1222).